Reading from the N-terminus, the 536-residue chain is ATP synthase subunit beta (536 aa).

The tract at residues 1-57 (MVKAVSSSKGAAKVEQKKSAARSGVKKNASKSQASLQDTSSPLKTSSKNAHAKKDVQ) is disordered. A compositionally biased stretch (polar residues) spans 30-49 (SKSQASLQDTSSPLKTSSKN). ATP is bound at residue 208–215 (GGAGVGKT).

It belongs to the ATPase alpha/beta chains family. As to quaternary structure, F-type ATPases have 2 components, CF(1) - the catalytic core - and CF(0) - the membrane proton channel. CF(1) has five subunits: alpha(3), beta(3), gamma(1), delta(1), epsilon(1). CF(0) has three main subunits: a(1), b(2) and c(9-12). The alpha and beta chains form an alternating ring which encloses part of the gamma chain. CF(1) is attached to CF(0) by a central stalk formed by the gamma and epsilon chains, while a peripheral stalk is formed by the delta and b chains.

The protein localises to the cell inner membrane. The enzyme catalyses ATP + H2O + 4 H(+)(in) = ADP + phosphate + 5 H(+)(out). Produces ATP from ADP in the presence of a proton gradient across the membrane. The catalytic sites are hosted primarily by the beta subunits. The protein is ATP synthase subunit beta of Bartonella quintana (strain Toulouse) (Rochalimaea quintana).